We begin with the raw amino-acid sequence, 317 residues long: Carbonic anhydrase 5B, mitochondrial (317 aa).

The N-terminal 33 residues, 1 to 33, are a transit peptide targeting the mitochondrion; sequence MTVMSHLRVSLQVSSCTLLWRRFRVPRLVPLRS. The Alpha-carbonic anhydrase domain maps to 37-296; that stretch reads YTCTYRTRNR…LMNRTVRSSF (260 aa). Zn(2+) is bound by residues His-130, His-132, and His-155. Residue 235–236 coordinates substrate; it reads TT.

The protein belongs to the alpha-carbonic anhydrase family. Requires Zn(2+) as cofactor.

Its subcellular location is the mitochondrion. The catalysed reaction is hydrogencarbonate + H(+) = CO2 + H2O. Functionally, mitochondrial carbonic anhydrase that catalyzes the reversible conversion of carbon dioxide to bicarbonate/HCO3. The protein is Carbonic anhydrase 5B, mitochondrial (Ca5b) of Rattus norvegicus (Rat).